A 607-amino-acid chain; its full sequence is Glutamine--fructose-6-phosphate aminotransferase [isomerizing] (607 aa).

Catalysis depends on C2, which acts as the Nucleophile; for GATase activity. One can recognise a Glutamine amidotransferase type-2 domain in the interval 2-217; it reads CGIIGILGKK…DGDWAVLTRE (216 aa). SIS domains follow at residues 277-422 and 455-597; these read TVRS…QRGS and ICRD…VDQP. Catalysis depends on K602, which acts as the For Fru-6P isomerization activity.

Homodimer.

Its subcellular location is the cytoplasm. It catalyses the reaction D-fructose 6-phosphate + L-glutamine = D-glucosamine 6-phosphate + L-glutamate. In terms of biological role, catalyzes the first step in hexosamine metabolism, converting fructose-6P into glucosamine-6P using glutamine as a nitrogen source. The chain is Glutamine--fructose-6-phosphate aminotransferase [isomerizing] from Bartonella quintana (strain Toulouse) (Rochalimaea quintana).